The primary structure comprises 400 residues: Delta(12) fatty acid desaturase (400 aa).

A helical transmembrane segment spans residues 91–111; the sequence is LAWPAYWIMQGIVCTGIWVLA. A Histidine box-1 motif is present at residues 112–116; it reads HECGH. The Histidine box-2 signature appears at 148–152; the sequence is HSKHH. The next 3 helical transmembrane spans lie at 199-219, 245-265, and 277-297; these read IVTLFWMVIQFLFGWPAYLIM, FFDIIISDLGVLAALGALIYA, and YYIIPYLFVNFWLVLITFLQH. The short motif at 339-343 is the Histidine box-3 element; sequence HVAHH.

Belongs to the fatty acid desaturase type 1 family.

The protein localises to the membrane. It catalyses the reaction (9Z)-octadecenoyl-CoA + 2 Fe(II)-[cytochrome b5] + O2 + 2 H(+) = (9Z,12Z)-octadecadienoyl-CoA + 2 Fe(III)-[cytochrome b5] + 2 H2O. The catalysed reaction is (9Z)-hexadecenoyl-CoA + 2 Fe(II)-[cytochrome b5] + O2 + 2 H(+) = (9Z,12Z)-hexadecadienoyl-CoA + 2 Fe(III)-[cytochrome b5] + 2 H2O. Its pathway is lipid metabolism; polyunsaturated fatty acid biosynthesis. Its function is as follows. Catalyzes the desaturation of oleic acid (Delta(9)-18:1) to linoleic acid (Delta(9), Delta(12)-18:2). The protein is Delta(12) fatty acid desaturase of Mortierella isabellina (Filamentous fungus).